Here is a 392-residue protein sequence, read N- to C-terminus: Branched-chain-amino-acid aminotransferase, mitochondrial (392 aa).

A mitochondrion-targeting transit peptide spans 1-27 (MAAAALGQIWARKLLSVPWLLCGPRRY). Tyr-168 is a substrate binding site. Residue Lys-229 is modified to N6-(pyridoxal phosphate)lysine. Lys-321 carries the post-translational modification N6-acetyllysine.

It belongs to the class-IV pyridoxal-phosphate-dependent aminotransferase family. Homodimer. Requires pyridoxal 5'-phosphate as cofactor. In terms of tissue distribution, ubiquitous.

The protein resides in the mitochondrion. The enzyme catalyses L-leucine + 2-oxoglutarate = 4-methyl-2-oxopentanoate + L-glutamate. It carries out the reaction L-isoleucine + 2-oxoglutarate = (S)-3-methyl-2-oxopentanoate + L-glutamate. The catalysed reaction is L-valine + 2-oxoglutarate = 3-methyl-2-oxobutanoate + L-glutamate. Functionally, catalyzes the first reaction in the catabolism of the essential branched chain amino acids leucine, isoleucine, and valine. May also function as a transporter of branched chain alpha-keto acids. This Homo sapiens (Human) protein is Branched-chain-amino-acid aminotransferase, mitochondrial (BCAT2).